The sequence spans 420 residues: UDP-N-acetylglucosamine 1-carboxyvinyltransferase (420 aa).

22-23 provides a ligand contact to phosphoenolpyruvate; it reads KN. R92 contacts UDP-N-acetyl-alpha-D-glucosamine. Catalysis depends on C116, which acts as the Proton donor. C116 carries the post-translational modification 2-(S-cysteinyl)pyruvic acid O-phosphothioketal. Residues 121 to 125, 161 to 164, D306, and I328 each bind UDP-N-acetyl-alpha-D-glucosamine; these read RPVDL and KVSV.

Belongs to the EPSP synthase family. MurA subfamily.

It is found in the cytoplasm. The catalysed reaction is phosphoenolpyruvate + UDP-N-acetyl-alpha-D-glucosamine = UDP-N-acetyl-3-O-(1-carboxyvinyl)-alpha-D-glucosamine + phosphate. It functions in the pathway cell wall biogenesis; peptidoglycan biosynthesis. In terms of biological role, cell wall formation. Adds enolpyruvyl to UDP-N-acetylglucosamine. The polypeptide is UDP-N-acetylglucosamine 1-carboxyvinyltransferase (Yersinia pseudotuberculosis serotype O:1b (strain IP 31758)).